The following is a 586-amino-acid chain: CTP synthase 2 (586 aa).

A Glutamine amidotransferase type-1 domain is found at 300–554 (SIALVGKYTK…LAATGNLNAY (255 aa)). Active-site for GATase activity residues include cysteine 399, histidine 526, and glutamate 528. The disordered stretch occupies residues 564-586 (SDRYSDASDDSFSEPRLAELEIS). A phosphoserine mark is found at serine 568, serine 571, and serine 574.

This sequence belongs to the CTP synthase family.

The enzyme catalyses UTP + L-glutamine + ATP + H2O = CTP + L-glutamate + ADP + phosphate + 2 H(+). The protein operates within pyrimidine metabolism; CTP biosynthesis via de novo pathway; CTP from UDP: step 2/2. Catalyzes the ATP-dependent amination of UTP to CTP with either L-glutamine or ammonia as the source of nitrogen. Constitutes the rate-limiting enzyme in the synthesis of cytosine nucleotides. This is CTP synthase 2 (CTPS2) from Bos taurus (Bovine).